Here is a 215-residue protein sequence, read N- to C-terminus: Cytochrome b6 (215 aa).

Residues 32–52 traverse the membrane as a helical segment; it reads IFYCLGGITLTCFLVQVATGF. C35 lines the heme c pocket. Positions 86 and 100 each coordinate heme b. 3 helical membrane-spanning segments follow: residues 90–110, 116–136, and 186–206; these read ASMMVLMMILHVFRVYLTGGF, LTWVTGVVLAVLTASFGVTGY, and LHTFVLPLLTAVFMLMHFLMI. The heme b site is built by H187 and H202.

It belongs to the cytochrome b family. PetB subfamily. In terms of assembly, the 4 large subunits of the cytochrome b6-f complex are cytochrome b6, subunit IV (17 kDa polypeptide, PetD), cytochrome f and the Rieske protein, while the 4 small subunits are PetG, PetL, PetM and PetN. The complex functions as a dimer. It depends on heme b as a cofactor. The cofactor is heme c.

The protein resides in the plastid. It is found in the chloroplast thylakoid membrane. Functionally, component of the cytochrome b6-f complex, which mediates electron transfer between photosystem II (PSII) and photosystem I (PSI), cyclic electron flow around PSI, and state transitions. This chain is Cytochrome b6, found in Oenothera elata subsp. hookeri (Hooker's evening primrose).